Reading from the N-terminus, the 203-residue chain is NAD(P)H-quinone oxidoreductase subunit M, chloroplastic (203 aa).

The N-terminal 21 residues, 1 to 21, are a transit peptide targeting the chloroplast; it reads MAASSSYMACAKFSMLGWLGG. Over residues 34–48 the composition is skewed to low complexity; the sequence is SPQEQAEVQESQEVN. The tract at residues 34–61 is disordered; the sequence is SPQEQAEVQESQEVNAQEEEKVKQPVQP.

The protein belongs to the NDH complex subunit M family. As to quaternary structure, part of the chloroplast NDH complex, composed of a mixture of chloroplast and nucleus encoded subunits. Component of the NDH subcomplex A, at least composed of ndhH, ndhI, ndhJ, ndhK, ndhL, ndhM, ndhN and ndhO.

The protein resides in the plastid. Its subcellular location is the chloroplast thylakoid membrane. It carries out the reaction a plastoquinone + NADH + (n+1) H(+)(in) = a plastoquinol + NAD(+) + n H(+)(out). The catalysed reaction is a plastoquinone + NADPH + (n+1) H(+)(in) = a plastoquinol + NADP(+) + n H(+)(out). Functionally, NDH shuttles electrons from NAD(P)H:plastoquinone, via FMN and iron-sulfur (Fe-S) centers, to quinones in the photosynthetic chain and possibly in a chloroplast respiratory chain. The immediate electron acceptor for the enzyme in this species is believed to be plastoquinone. Couples the redox reaction to proton translocation, and thus conserves the redox energy in a proton gradient. This is NAD(P)H-quinone oxidoreductase subunit M, chloroplastic from Populus jackii (Balm of Gilead).